A 197-amino-acid polypeptide reads, in one-letter code: Probable UbiX-like flavin prenyltransferase (197 aa).

Residues 9 to 11 (GAT), Ser-36, 87 to 90 (SMKT), and Arg-122 contribute to the FMN site.

This sequence belongs to the UbiX/PAD1 family. YclB subfamily. As to quaternary structure, homododecamer.

The catalysed reaction is dimethylallyl phosphate + FMNH2 = prenylated FMNH2 + phosphate. In terms of biological role, flavin prenyltransferase that catalyzes the synthesis of the prenylated FMN cofactor (prenyl-FMN) for phenolic acid decarboxylase C. Involved in the decarboxylation and detoxification of phenolic derivatives under both aerobic and anaerobic conditions. This chain is Probable UbiX-like flavin prenyltransferase (ecdB), found in Escherichia coli O111:H-.